The primary structure comprises 872 residues: Adhesive plaque matrix protein (872 aa).

An N-terminal signal peptide occupies residues 1 to 20 (MEGIKLNLCLLCIFSCDIFA). The interval 21-41 (LSNGNIHNVYGSAYSGASAGA) is nonrepetitive linker. A run of 69 repeats spans residues 124 to 133 (YKAKTSYPPS), 134 to 143 (YKHKITYPPT), 144 to 153 (YKPKITYPPT), 154 to 163 (YKQKPSYPPS), 174 to 183 (YKPKITYPPT), 184 to 192 (YKRKPSYTP), 193 to 202 (YKPKATYPPT), 203 to 212 (YKPKITYPPT), 213 to 221 (YKRKPSYTP), 222 to 231 (YKPKTTYPPT), 232 to 241 (YKPKISYPSI), 242 to 251 (YKPKASYVSS), 252 to 261 (YKSKKTYPPT), 262 to 271 (YKPKISYPPT), 272 to 281 (YKPKPSYPPT), 282 to 291 (YKPKVTYPPT), 292 to 301 (YKPKPSYPPT), 302 to 311 (YKPKITYPPT), 312 to 321 (YKPKPSYPTP), 322 to 331 (YKQKPSYPPI), 332 to 341 (YKSKSSYPTS), 342 to 351 (YKSKKTYPPT), 352 to 361 (YKPKITYPPT), 362 to 371 (YKPKPSYPPS), 372 to 381 (YKPKKTYSPT), 382 to 391 (YKPKITYPPT), 402 to 411 (YKPKTTYPPT), 412 to 421 (YKPKISYPPT), 422 to 431 (YKPKASYVSS), 432 to 441 (YKSKKTYPPT), 442 to 451 (YKPKISYPPT), 452 to 461 (YKPKPSYPPT), 462 to 471 (YKPKITYPPT), 472 to 481 (YKPKPSYPPT), 482 to 491 (YKPKITYPPT), 502 to 511 (YKQKPSYPPI), 512 to 521 (YKSKSSYPTS), 522 to 531 (YKSKKTYPPT), 532 to 541 (YKPKITYPPT), 542 to 551 (YKPKPSYPPS), 552 to 561 (YKPKTTYPPT), 562 to 571 (YKPKIRYPPT), 572 to 581 (YKPKASYPPT), 582 to 591 (YKPKITYPPT), 602 to 611 (YKQKPSYPPI), 612 to 621 (YKSKSSYPTA), 622 to 631 (YKSKKTYPPT), 632 to 641 (YKPKITYPPT), 642 to 651 (YKPKPSYPPS), 652 to 661 (YRPKITYPPT), 662 to 671 (YKPKKSYPQA), 672 to 681 (YKSKGSYPPS), 682 to 691 (YQPKKTYPPS), 702 to 711 (YKPKISYPPT), 712 to 721 (YKTKPSYPAS), 722 to 731 (YKRKTSYPPT), 732 to 741 (YKPKISYPST), 742 to 751 (YKAKPSYPPT), 752 to 761 (YKPKPSYASS), 762 to 771 (YKPKIRYPPT), 772 to 781 (YKPKPSYASS), 782 to 791 (YKPKIRYPPT), 792 to 801 (YKPKPSYASS), 812 to 821 (YKPKPSYASS), 822 to 831 (YKPKITYPPT), 832 to 841 (YKPKISYPPT), 842 to 851 (YKPKITYPPT), 852 to 861 (YKPKISYPPA), and 862 to 871 (YKPKISYPSQ). The interval 124-871 (YKAKTSYPPS…YKPKISYPSQ (748 aa)) is 69 X 10 AA tandem repeats of Y-[KRQ]-[PSTAHQR]-K-[AIPTSKGV]-[STR]-Y-[PTSVA]-[PSTQA]-[STYIPAQ]. Positions 184–192 (YKRKPSYTP) are nonapeptide 1. The segment at 213 to 221 (YKRKPSYTP) is nonapeptide 2. Pro residues-rich tracts occupy residues 273 to 282 (KPKPSYPPTY) and 291 to 302 (TYKPKPSYPPTY). The disordered stretch occupies residues 273-781 (KPKPSYPPTY…YKPKPSYASS (509 aa)). Residues 320 to 360 (TPYKQKPSYPPIYKSKSSYPTSYKSKKTYPPTYKPKITYPP) are compositionally biased toward low complexity. Residues 361–372 (TYKPKPSYPPSY) show a composition bias toward pro residues. Over residues 377 to 390 (TYSPTYKPKITYPP) the composition is skewed to low complexity. A compositionally biased stretch (pro residues) spans 391-402 (TYKPKPSYPPSY). Over residues 403-450 (KPKTTYPPTYKPKISYPPTYKPKASYVSSYKSKKTYPPTYKPKISYPP) the composition is skewed to low complexity. Pro residues-rich tracts occupy residues 451 to 462 (TYKPKPSYPPTY) and 471 to 482 (TYKPKPSYPPTY). Residues 501–540 (PYKQKPSYPPIYKSKSSYPTSYKSKKTYPPTYKPKITYPP) show a composition bias toward low complexity. Residues 541 to 552 (TYKPKPSYPPSY) are compositionally biased toward pro residues. 2 stretches are compositionally biased toward low complexity: residues 568 to 590 (YPPT…TYPP) and 600 to 640 (TPYK…TYPP). Residues 641-652 (TYKPKPSYPPSY) show a composition bias toward pro residues. 2 stretches are compositionally biased toward low complexity: residues 677–690 (SYPP…TYPP) and 698–719 (YPPT…PSYP). The span at 754–763 (PKPSYASSYK) shows a compositional bias: low complexity.

Post-translationally, hydroxylated on proline (mono- or dihydroxylation) and tyrosine residues (to L-DOPA = 3',4'-dihydroxyphenylalanine) of the tandem repeats. In terms of tissue distribution, produced by the byssal gland.

It localises to the secreted. Its function is as follows. Provides adhesiveness to the mussel's foot. Mussels produce one of the strongest water insoluble glues. The mussel's adhesive is a bundle of threads, called a byssus, formed by a fibrous collagenous core coated with adhesive proteins. The chain is Adhesive plaque matrix protein (FP1) from Mytilus coruscus (Sea mussel).